Here is a 118-residue protein sequence, read N- to C-terminus: Ribonuclease P protein component (118 aa).

It belongs to the RnpA family. Consists of a catalytic RNA component (M1 or rnpB) and a protein subunit.

It carries out the reaction Endonucleolytic cleavage of RNA, removing 5'-extranucleotides from tRNA precursor.. In terms of biological role, RNaseP catalyzes the removal of the 5'-leader sequence from pre-tRNA to produce the mature 5'-terminus. It can also cleave other RNA substrates such as 4.5S RNA. The protein component plays an auxiliary but essential role in vivo by binding to the 5'-leader sequence and broadening the substrate specificity of the ribozyme. The polypeptide is Ribonuclease P protein component (Rickettsia typhi (strain ATCC VR-144 / Wilmington)).